A 474-amino-acid chain; its full sequence is tRNA-2-methylthio-N(6)-dimethylallyladenosine synthase (474 aa).

In terms of domain architecture, MTTase N-terminal spans 3-120 (KKLYIKTFGC…LPQMISTRQI (118 aa)). The [4Fe-4S] cluster site is built by Cys-12, Cys-49, Cys-83, Cys-157, Cys-161, and Cys-164. Residues 143–382 (RTEGVTAFVS…ELQAQAISVR (240 aa)) enclose the Radical SAM core domain. In terms of domain architecture, TRAM spans 381 to 444 (VRMVGTTQRV…SHTLRGENVR (64 aa)).

The protein belongs to the methylthiotransferase family. MiaB subfamily. Monomer. [4Fe-4S] cluster is required as a cofactor.

Its subcellular location is the cytoplasm. It carries out the reaction N(6)-dimethylallyladenosine(37) in tRNA + (sulfur carrier)-SH + AH2 + 2 S-adenosyl-L-methionine = 2-methylsulfanyl-N(6)-dimethylallyladenosine(37) in tRNA + (sulfur carrier)-H + 5'-deoxyadenosine + L-methionine + A + S-adenosyl-L-homocysteine + 2 H(+). In terms of biological role, catalyzes the methylthiolation of N6-(dimethylallyl)adenosine (i(6)A), leading to the formation of 2-methylthio-N6-(dimethylallyl)adenosine (ms(2)i(6)A) at position 37 in tRNAs that read codons beginning with uridine. The protein is tRNA-2-methylthio-N(6)-dimethylallyladenosine synthase of Nitrosospira multiformis (strain ATCC 25196 / NCIMB 11849 / C 71).